We begin with the raw amino-acid sequence, 262 residues long: Nurim (262 aa).

Over 1 to 4 the chain is Nuclear; the sequence is MAPA. Residues 5-28 traverse the membrane as a helical segment; it reads LLLVPAALASFILAFGTGVEFVRF. Residues 29–58 are Perinuclear space-facing; the sequence is TSLRPLLGGIPESGGPDARHGWLAALQDRS. The helical transmembrane segment at 59–80 threads the bilayer; that stretch reads ILASLAWDLCLLLLFVVQHSLM. The Nuclear portion of the chain corresponds to 81–97; the sequence is ATEAVKAWTSRYFGVLQ. A helical membrane pass occupies residues 98-114; that stretch reads RSLYVACTALALQLVMR. Residues 115-133 are Perinuclear space-facing; sequence YWETTPRGPVLWEARAEPW. Residues 134 to 164 form a helical membrane-spanning segment; that stretch reads ATWVPLLCFVLHVVSWLLIFSILLVFDYAEL. Residues 165-191 are Nuclear-facing; that stretch reads MGLKQVYYHVLGLGEPLSLKSPRALRL. Residues 192-210 traverse the membrane as a helical segment; it reads FSHLRHPVCVELLTVLWVV. Residues 211–216 lie on the Perinuclear space side of the membrane; that stretch reads PTLGTD. The chain crosses the membrane as a helical span at residues 217–234; the sequence is RLLLALLFTLYLGLAHGL. Residues 235–262 lie on the Nuclear side of the membrane; sequence DQQDLRYLRSQLQRKLHLLSRPQDGEAE.

The protein belongs to the nurim family.

The protein localises to the nucleus inner membrane. This chain is Nurim (Nrm), found in Mus musculus (Mouse).